The chain runs to 204 residues: Ribosomal RNA small subunit methyltransferase G (204 aa).

Residues G76, L81, 127–128, and R140 each bind S-adenosyl-L-methionine; that span reads IE.

The protein belongs to the methyltransferase superfamily. RNA methyltransferase RsmG family.

Its subcellular location is the cytoplasm. It carries out the reaction guanosine(527) in 16S rRNA + S-adenosyl-L-methionine = N(7)-methylguanosine(527) in 16S rRNA + S-adenosyl-L-homocysteine. In terms of biological role, specifically methylates the N7 position of guanine in position 527 of 16S rRNA. The polypeptide is Ribosomal RNA small subunit methyltransferase G (Francisella philomiragia subsp. philomiragia (strain ATCC 25017 / CCUG 19701 / FSC 153 / O#319-036)).